Consider the following 172-residue polypeptide: Nicotinamide-nucleotide adenylyltransferase (172 aa).

The protein belongs to the archaeal NMN adenylyltransferase family.

The protein localises to the cytoplasm. The enzyme catalyses beta-nicotinamide D-ribonucleotide + ATP + H(+) = diphosphate + NAD(+). Its pathway is cofactor biosynthesis; NAD(+) biosynthesis; NAD(+) from nicotinamide D-ribonucleotide: step 1/1. This Sulfurisphaera tokodaii (strain DSM 16993 / JCM 10545 / NBRC 100140 / 7) (Sulfolobus tokodaii) protein is Nicotinamide-nucleotide adenylyltransferase.